The following is a 719-amino-acid chain: Exonuclease mut-7 homolog (719 aa).

Residues 1–22 are disordered; sequence MSKSNNVAPPCRQDQLGFVPAG. Residues 575–629 enclose the 3'-5' exonuclease domain; sequence NLANLVRLCLGKKLDKSNQFSNWAQRPLRKEQLRYAALDAFCLLEIYDAIEKQLT. The segment at 644-719 is disordered; the sequence is NDVRPPSDSG…FEGPNTKSVL (76 aa). Residues 667-678 are compositionally biased toward basic residues; it reads RRNHRDKYNKRH. 2 stretches are compositionally biased toward polar residues: residues 683 to 692 and 706 to 719; these read DSNSGNSSRA and EQQT…KSVL.

The protein belongs to the mut-7 family. The cofactor is Mg(2+).

In terms of biological role, possesses 3'-5' exoribonuclease activity. Required for 3'-end trimming of AGO1-bound miRNAs. This chain is Exonuclease mut-7 homolog, found in Aedes aegypti (Yellowfever mosquito).